Here is a 517-residue protein sequence, read N- to C-terminus: Glucans biosynthesis protein G (517 aa).

The signal sequence occupies residues 1–28 (MKHKLQMMKMRWLSAAVMLTLYTSSSWA).

This sequence belongs to the OpgD/OpgG family.

The protein resides in the periplasm. Its pathway is glycan metabolism; osmoregulated periplasmic glucan (OPG) biosynthesis. Functionally, involved in the biosynthesis of osmoregulated periplasmic glucans (OPGs). The protein is Glucans biosynthesis protein G of Escherichia coli O1:K1 / APEC.